The following is a 185-amino-acid chain: Large ribosomal subunit protein uL5 (185 aa).

This sequence belongs to the universal ribosomal protein uL5 family. In terms of assembly, part of the 50S ribosomal subunit; part of the 5S rRNA/L5/L18/L25 subcomplex. Contacts the 5S rRNA and the P site tRNA. Forms a bridge to the 30S subunit in the 70S ribosome.

This is one of the proteins that bind and probably mediate the attachment of the 5S RNA into the large ribosomal subunit, where it forms part of the central protuberance. In the 70S ribosome it contacts protein S13 of the 30S subunit (bridge B1b), connecting the 2 subunits; this bridge is implicated in subunit movement. Contacts the P site tRNA; the 5S rRNA and some of its associated proteins might help stabilize positioning of ribosome-bound tRNAs. This chain is Large ribosomal subunit protein uL5, found in Rhodopseudomonas palustris (strain BisB5).